Here is a 348-residue protein sequence, read N- to C-terminus: Alternative squalene epoxidase (348 aa).

The span at 1–10 shows a compositional bias: basic and acidic residues; the sequence is MLVDRVENNE. The disordered stretch occupies residues 1–26; that stretch reads MLVDRVENNEKQQQQMASSSDAMSDS. A compositionally biased stretch (low complexity) spans 12–26; the sequence is QQQQMASSSDAMSDS. Helical transmembrane passes span 55–75, 105–125, and 153–173; these read AIAW…LLLS, LGLV…WIFF, and GLLT…YLAI. One can recognise a Fatty acid hydroxylase domain in the interval 197 to 332; that stretch reads FMCLVLQDGI…FMWFDQLGGT (136 aa). The Histidine box-1 signature appears at 211-215; sequence HVLEH. The Histidine box-2 motif lies at 226-230; that stretch reads HKPHH. 2 helical membrane passes run 243–263 and 277–297; these read GSLM…ANLV and SYAC…DGIF. A Histidine box-3 motif is present at residues 308 to 312; the sequence is HHVHH.

Belongs to the sterol desaturase family. As to quaternary structure, interacts with cytochrome b5/PHATRDRAFT_30770. Fe cation is required as a cofactor.

Its subcellular location is the endoplasmic reticulum membrane. It catalyses the reaction squalene + 2 Fe(II)-[cytochrome b5] + O2 + 2 H(+) = (S)-2,3-epoxysqualene + 2 Fe(III)-[cytochrome b5] + H2O. Its pathway is terpene metabolism; lanosterol biosynthesis; lanosterol from farnesyl diphosphate. The activity of this enzyme is not inhibited by terbinafine, an established inhibitor of the conventional flavoprotein squalene epoxidase. Its function is as follows. Catalyzes the stereospecific epoxidation of squalene at the terminal double bond to form (S)-2,3-epoxysqualene, the first oxygenation step in sterol biosynthesis. The polypeptide is Alternative squalene epoxidase (Phaeodactylum tricornutum (strain CCAP 1055/1)).